We begin with the raw amino-acid sequence, 408 residues long: Tripartite motif containing 13 (408 aa).

The RING-type zinc-finger motif lies at 10-58 (CPICCSLFDDPRVLPCSHNFCKKCLDGVLEENSRTMQWRPSSFKCPTCR). The B box-type zinc-finger motif lies at 89–131 (PKMPVCKEHSDQPLNIFCSTDLKLICGSCATTGEHKKHVFSSI). Zn(2+) contacts are provided by Cys94, His97, Cys117, and His123. A helical transmembrane segment spans residues 322 to 342 (ILVVACLILLLVTFLCAYPFI).

Its subcellular location is the endoplasmic reticulum membrane. The protein operates within protein modification; protein ubiquitination. In terms of biological role, E3 ubiquitin ligase involved in the retrotranslocation and turnover of membrane and secretory proteins from the ER through a set of processes named ER-associated degradation (ERAD). This process acts on misfolded proteins as well as in the regulated degradation of correctly folded proteins. In Xenopus tropicalis (Western clawed frog), this protein is Tripartite motif containing 13 (trim13).